Consider the following 950-residue polypeptide: 2-oxoglutarate dehydrogenase E1 component (950 aa).

It belongs to the alpha-ketoglutarate dehydrogenase family. Homodimer. Part of the 2-oxoglutarate dehydrogenase (OGDH) complex composed of E1 (2-oxoglutarate dehydrogenase), E2 (dihydrolipoamide succinyltransferase) and E3 (dihydrolipoamide dehydrogenase); the complex contains multiple copies of the three enzymatic components (E1, E2 and E3). Thiamine diphosphate is required as a cofactor.

It catalyses the reaction N(6)-[(R)-lipoyl]-L-lysyl-[protein] + 2-oxoglutarate + H(+) = N(6)-[(R)-S(8)-succinyldihydrolipoyl]-L-lysyl-[protein] + CO2. Functionally, E1 component of the 2-oxoglutarate dehydrogenase (OGDH) complex which catalyzes the decarboxylation of 2-oxoglutarate, the first step in the conversion of 2-oxoglutarate to succinyl-CoA and CO(2). This chain is 2-oxoglutarate dehydrogenase E1 component (odhA), found in Cupriavidus necator (strain ATCC 17699 / DSM 428 / KCTC 22496 / NCIMB 10442 / H16 / Stanier 337) (Ralstonia eutropha).